Reading from the N-terminus, the 372-residue chain is THAP domain-containing protein 5 (372 aa).

A THAP-type zinc finger spans residues 1–85; it reads MTRYCAATRC…LKPNAIPTLF (85 aa). Positions 306–362 form a coiled coil; it reads TDRHYLRQKIAKLQSKIAVLEAQENATLSRLRLLESVIAKLKQENLLSDEKLKILEN.

The protein resides in the nucleus. This chain is THAP domain-containing protein 5 (thap5), found in Xenopus laevis (African clawed frog).